Here is a 157-residue protein sequence, read N- to C-terminus: Class I hydrophobin rodA (157 aa).

The signal sequence occupies residues 1-41 (MKFSIAAAVVAFAASVAALPPAHDSQFAGNGVGNKGNSNVK). Residue asparagine 47 is glycosylated (N-linked (GlcNAc...) asparagine). Cystine bridges form between cysteine 57/cysteine 131, cysteine 65/cysteine 125, cysteine 66/cysteine 106, and cysteine 132/cysteine 150.

Belongs to the fungal hydrophobin family. In terms of assembly, self-assembles to form functional amyloid fibrils called rodlets. Self-assembly into fibrillar rodlets occurs spontaneously at hydrophobic:hydrophilic interfaces and the rodlets further associate laterally to form amphipathic monolayers.

Its subcellular location is the secreted. The protein resides in the spore wall. Functionally, aerial growth, conidiation, and dispersal of filamentous fungi in the environment rely upon a capability of their secreting small amphipathic proteins called hydrophobins (HPBs) with low sequence identity. Class I can self-assemble into an outermost layer of rodlet bundles on aerial cell surfaces, conferring cellular hydrophobicity that supports fungal growth, development and dispersal; whereas Class II form highly ordered films at water-air interfaces through intermolecular interactions but contribute nothing to the rodlet structure. RodA is a class I hydrophobin that contributes to surface hydrophobicity, which is important for processes such as association of hyphae in reproductive structures, dispersal of aerial spores and adhesion of pathogens to host structures. Important for the formation of hydrophobic rodlet layers of asexually-produced spores. Promotes also biofilm formation and may enhance lignocellulose utilization via promoting a compact substrate-enzyme-fungus structure. The protein is Class I hydrophobin rodA of Emericella nidulans (strain FGSC A4 / ATCC 38163 / CBS 112.46 / NRRL 194 / M139) (Aspergillus nidulans).